The primary structure comprises 359 residues: 3-dehydroquinate synthase (359 aa).

NAD(+)-binding positions include 71–76 (DGEAYK), 105–109 (GVIGD), 129–130 (TT), Lys142, and Lys151. Residues Glu184, His247, and His264 each contribute to the Zn(2+) site.

The protein belongs to the sugar phosphate cyclases superfamily. Dehydroquinate synthase family. It depends on Co(2+) as a cofactor. The cofactor is Zn(2+). NAD(+) serves as cofactor.

The protein localises to the cytoplasm. The enzyme catalyses 7-phospho-2-dehydro-3-deoxy-D-arabino-heptonate = 3-dehydroquinate + phosphate. Its pathway is metabolic intermediate biosynthesis; chorismate biosynthesis; chorismate from D-erythrose 4-phosphate and phosphoenolpyruvate: step 2/7. Catalyzes the conversion of 3-deoxy-D-arabino-heptulosonate 7-phosphate (DAHP) to dehydroquinate (DHQ). This chain is 3-dehydroquinate synthase, found in Burkholderia multivorans (strain ATCC 17616 / 249).